Here is a 1475-residue protein sequence, read N- to C-terminus: Alpha-glucan water dikinase, chloroplastic (1475 aa).

The N-terminal 85 residues, Met1–Ala85, are a transit peptide targeting the chloroplast. The Tele-phosphohistidine intermediate role is filled by His1077.

The protein belongs to the PEP-utilizing enzyme family. In terms of assembly, homodimer. Mg(2+) serves as cofactor.

Its subcellular location is the plastid. The protein resides in the chloroplast. The enzyme catalyses [(1-&gt;4)-alpha-D-glucosyl](n) + n ATP + n H2O = [(1-&gt;4)-6-phospho-alpha-D-glucosyl](n) + n AMP + n phosphate + 2n H(+). Mediates the incorporation of phosphate into starch-like alpha-glucan, mostly at the C-6 position of glucose units. Acts as an overall regulator of starch mobilization. Required for starch degradation, suggesting that the phosphate content of starch regulates its degradability. The chain is Alpha-glucan water dikinase, chloroplastic (R1) from Citrus reticulata (Tangerine).